The primary structure comprises 77 residues: Neurexophilin-4 (77 aa).

Residues Asn1–Gly77 are v (Cys-rich).

Belongs to the neurexophilin family. May be proteolytically processed at the boundary between the N-terminal non-conserved and the central conserved domain in neuron-like cells.

The protein resides in the secreted. In terms of biological role, may be signaling molecules that resemble neuropeptides and that act by binding to alpha-neurexins and possibly other receptors. The polypeptide is Neurexophilin-4 (NXPH4) (Macaca mulatta (Rhesus macaque)).